The chain runs to 365 residues: Protein-glutamate methylesterase/protein-glutamine glutaminase (365 aa).

Positions 5–122 (KVLIVDDSAF…SLDIRKIGEK (118 aa)) constitute a Response regulatory domain. Asp56 carries the 4-aspartylphosphate modification. Positions 146 to 155 (IKKEKQDESS) are enriched in basic and acidic residues. Residues 146–167 (IKKEKQDESSTPKPQVEKTSGL) form a disordered region. Residues 156-167 (TPKPQVEKTSGL) show a composition bias toward polar residues. One can recognise a CheB-type methylesterase domain in the interval 177 to 363 (ILIGSSTGGP…LEIIKFAKKI (187 aa)). Residues Ser182, His208, and Asp305 contribute to the active site.

It belongs to the CheB family. Phosphorylated by CheA. Phosphorylation of the N-terminal regulatory domain activates the methylesterase activity.

It localises to the cytoplasm. It carries out the reaction [protein]-L-glutamate 5-O-methyl ester + H2O = L-glutamyl-[protein] + methanol + H(+). The enzyme catalyses L-glutaminyl-[protein] + H2O = L-glutamyl-[protein] + NH4(+). Involved in chemotaxis. Part of a chemotaxis signal transduction system that modulates chemotaxis in response to various stimuli. Catalyzes the demethylation of specific methylglutamate residues introduced into the chemoreceptors (methyl-accepting chemotaxis proteins or MCP) by CheR. Also mediates the irreversible deamidation of specific glutamine residues to glutamic acid. This chain is Protein-glutamate methylesterase/protein-glutamine glutaminase, found in Methanococcus maripaludis (strain DSM 14266 / JCM 13030 / NBRC 101832 / S2 / LL).